The primary structure comprises 557 residues: Dihydroxy-acid dehydratase (557 aa).

Asp78 serves as a coordination point for Mg(2+). [2Fe-2S] cluster is bound at residue Cys119. 2 residues coordinate Mg(2+): Asp120 and Lys121. At Lys121 the chain carries N6-carboxylysine. Cys192 lines the [2Fe-2S] cluster pocket. Glu442 provides a ligand contact to Mg(2+). The active-site Proton acceptor is the Ser468.

This sequence belongs to the IlvD/Edd family. Homodimer. [2Fe-2S] cluster is required as a cofactor. Requires Mg(2+) as cofactor.

It carries out the reaction (2R)-2,3-dihydroxy-3-methylbutanoate = 3-methyl-2-oxobutanoate + H2O. The enzyme catalyses (2R,3R)-2,3-dihydroxy-3-methylpentanoate = (S)-3-methyl-2-oxopentanoate + H2O. Its pathway is amino-acid biosynthesis; L-isoleucine biosynthesis; L-isoleucine from 2-oxobutanoate: step 3/4. It participates in amino-acid biosynthesis; L-valine biosynthesis; L-valine from pyruvate: step 3/4. Functions in the biosynthesis of branched-chain amino acids. Catalyzes the dehydration of (2R,3R)-2,3-dihydroxy-3-methylpentanoate (2,3-dihydroxy-3-methylvalerate) into 2-oxo-3-methylpentanoate (2-oxo-3-methylvalerate) and of (2R)-2,3-dihydroxy-3-methylbutanoate (2,3-dihydroxyisovalerate) into 2-oxo-3-methylbutanoate (2-oxoisovalerate), the penultimate precursor to L-isoleucine and L-valine, respectively. The sequence is that of Dihydroxy-acid dehydratase from Bacillus cereus (strain Q1).